The primary structure comprises 160 residues: Cytochrome c-type biogenesis protein CcmE (160 aa).

Residues 1 to 8 are Cytoplasmic-facing; that stretch reads MNPRRKKR. Residues 9-29 form a helical; Signal-anchor for type II membrane protein membrane-spanning segment; the sequence is LGIILAIFFGISATVGLMVYA. The Periplasmic portion of the chain corresponds to 30–160; the sequence is LNQNMDLFYT…TTEQKEGNAQ (131 aa). Positions 128 and 132 each coordinate heme.

It belongs to the CcmE/CycJ family.

The protein resides in the cell inner membrane. Functionally, heme chaperone required for the biogenesis of c-type cytochromes. Transiently binds heme delivered by CcmC and transfers the heme to apo-cytochromes in a process facilitated by CcmF and CcmH. In Vibrio atlanticus (strain LGP32) (Vibrio splendidus (strain Mel32)), this protein is Cytochrome c-type biogenesis protein CcmE.